The chain runs to 77 residues: Translation initiation factor IF-1, chloroplastic (77 aa).

The region spanning 1–72 (MKKQNLIEME…TKGRITYRLR (72 aa)) is the S1-like domain.

The protein belongs to the IF-1 family. Component of the 30S ribosomal translation pre-initiation complex which assembles on the 30S ribosome in the order IF-2 and IF-3, IF-1 and N-formylmethionyl-tRNA(fMet); mRNA recruitment can occur at any time during PIC assembly.

It localises to the plastid. The protein localises to the chloroplast. Functionally, one of the essential components for the initiation of protein synthesis. Stabilizes the binding of IF-2 and IF-3 on the 30S subunit to which N-formylmethionyl-tRNA(fMet) subsequently binds. Helps modulate mRNA selection, yielding the 30S pre-initiation complex (PIC). Upon addition of the 50S ribosomal subunit IF-1, IF-2 and IF-3 are released leaving the mature 70S translation initiation complex. This chain is Translation initiation factor IF-1, chloroplastic, found in Zygnema circumcarinatum (Green alga).